The sequence spans 154 residues: uncharacterized protein (154 aa).

4 consecutive transmembrane segments (helical) span residues 15–37 (DFSF…ALIT), 58–80 (FAAM…WLWG), 95–116 (LGAL…FAFT), and 123–145 (LVIS…FVPH).

The protein localises to the cell membrane. This is an uncharacterized protein from Archaeoglobus fulgidus (strain ATCC 49558 / DSM 4304 / JCM 9628 / NBRC 100126 / VC-16).